The sequence spans 291 residues: 4-diphosphocytidyl-2-C-methyl-D-erythritol kinase (291 aa).

Lys11 is an active-site residue. 94-104 (PAGSGLGGGSA) is an ATP binding site. Asp136 is a catalytic residue.

Belongs to the GHMP kinase family. IspE subfamily.

It catalyses the reaction 4-CDP-2-C-methyl-D-erythritol + ATP = 4-CDP-2-C-methyl-D-erythritol 2-phosphate + ADP + H(+). The protein operates within isoprenoid biosynthesis; isopentenyl diphosphate biosynthesis via DXP pathway; isopentenyl diphosphate from 1-deoxy-D-xylulose 5-phosphate: step 3/6. Catalyzes the phosphorylation of the position 2 hydroxy group of 4-diphosphocytidyl-2C-methyl-D-erythritol. The polypeptide is 4-diphosphocytidyl-2-C-methyl-D-erythritol kinase (Treponema pallidum (strain Nichols)).